A 110-amino-acid polypeptide reads, in one-letter code: Hydrogenase maturation factor HypA (110 aa).

A Ni(2+)-binding site is contributed by histidine 2. Cysteine 73, cysteine 76, cysteine 87, and cysteine 89 together coordinate Zn(2+).

The protein belongs to the HypA/HybF family.

Involved in the maturation of [NiFe] hydrogenases. Required for nickel insertion into the metal center of the hydrogenase. The protein is Hydrogenase maturation factor HypA of Archaeoglobus fulgidus (strain ATCC 49558 / DSM 4304 / JCM 9628 / NBRC 100126 / VC-16).